The sequence spans 139 residues: Low molecular weight protein-tyrosine-phosphatase PtpB (139 aa).

Residue Cys-7 is the Nucleophile of the active site. Arg-13 is an active-site residue. Asp-111 acts as the Proton donor in catalysis.

The protein belongs to the low molecular weight phosphotyrosine protein phosphatase family.

It carries out the reaction O-phospho-L-tyrosyl-[protein] + H2O = L-tyrosyl-[protein] + phosphate. In terms of biological role, dephosphorylates the phosphotyrosine-containing proteins. This Staphylococcus epidermidis (strain ATCC 35984 / DSM 28319 / BCRC 17069 / CCUG 31568 / BM 3577 / RP62A) protein is Low molecular weight protein-tyrosine-phosphatase PtpB (ptpB).